The primary structure comprises 209 residues: Uracil phosphoribosyltransferase (209 aa).

5-phospho-alpha-D-ribose 1-diphosphate contacts are provided by residues Arg-79, Arg-104, and 131–139 (DPMLATGGS). Uracil is bound by residues Ile-194 and 199–201 (GDA). Asp-200 contributes to the 5-phospho-alpha-D-ribose 1-diphosphate binding site.

Belongs to the UPRTase family. Mg(2+) serves as cofactor.

It carries out the reaction UMP + diphosphate = 5-phospho-alpha-D-ribose 1-diphosphate + uracil. The protein operates within pyrimidine metabolism; UMP biosynthesis via salvage pathway; UMP from uracil: step 1/1. Allosterically activated by GTP. In terms of biological role, catalyzes the conversion of uracil and 5-phospho-alpha-D-ribose 1-diphosphate (PRPP) to UMP and diphosphate. The chain is Uracil phosphoribosyltransferase from Chromohalobacter salexigens (strain ATCC BAA-138 / DSM 3043 / CIP 106854 / NCIMB 13768 / 1H11).